The primary structure comprises 325 residues: G-protein coupled receptor E6 (325 aa).

7 consecutive transmembrane segments (helical) span residues 45–65, 71–91, 106–126, 145–165, 198–218, 233–253, and 274–294; these read LFGT…MGFF, FTPS…LWLM, IVTE…NVGM, PAAI…VIAV, LVAK…GTAL, AICV…LTAM, and VFIY…MFTG.

It belongs to the G-protein coupled receptor 1 family.

The protein resides in the host membrane. The chain is G-protein coupled receptor E6 (E6) from Equus caballus (Horse).